Consider the following 626-residue polypeptide: ATP-dependent zinc metalloprotease FtsH (626 aa).

Residues 1 to 5 (MNFRN) lie on the Cytoplasmic side of the membrane. The chain crosses the membrane as a helical span at residues 6–26 (LAIWLVIVAVLGGVFVVSQNS). At 27–98 (RTKSSSEISY…DVKFKSGSIS (72 aa)) the chain is on the periplasmic side. A helical transmembrane segment spans residues 99–119 (FLAILVQLLPILLVVGVWLFL). The Cytoplasmic portion of the chain corresponds to 120-626 (MRQMQGGAKG…SPGAGASVTA (507 aa)). 191-198 (GPPGTGKT) is an ATP binding site. Residue histidine 413 coordinates Zn(2+). Glutamate 414 is an active-site residue. Zn(2+) contacts are provided by histidine 417 and aspartate 491.

The protein in the central section; belongs to the AAA ATPase family. This sequence in the C-terminal section; belongs to the peptidase M41 family. In terms of assembly, homohexamer. Requires Zn(2+) as cofactor.

It is found in the cell inner membrane. Its function is as follows. Acts as a processive, ATP-dependent zinc metallopeptidase for both cytoplasmic and membrane proteins. Plays a role in the quality control of integral membrane proteins. Functionally, absence of FtsH leads to increased sigma-32 levels, which suggests, in analogy to E.coli, that sigma-32 is a substrate for FtsH. May play a role in the general stress response, as overexpression leads to improved resistance to salt stress. This chain is ATP-dependent zinc metalloprotease FtsH, found in Caulobacter vibrioides (strain NA1000 / CB15N) (Caulobacter crescentus).